Reading from the N-terminus, the 117-residue chain is Immunoglobulin kappa variable 1-27 (117 aa).

Positions 1–22 are cleaved as a signal peptide; that stretch reads MDMRVPAQLLGLLLLWLPDTRC. The tract at residues 23-45 is framework-1; the sequence is DIQMTQSPSSLSASVGDRVTITC. One can recognise an Ig-like domain in the interval 23-117; that stretch reads DIQMTQSPSS…YYCQKYNSAP (95 aa). A disulfide bond links C45 and C110. The tract at residues 46–56 is complementarity-determining-1; that stretch reads RASQGISNYLA. Residues 57-71 are framework-2; sequence WYQQKPGKVPKLLIY. The complementarity-determining-2 stretch occupies residues 72–78; that stretch reads AASTLQS. The segment at 79–110 is framework-3; the sequence is GVPSRFSGSGSGTDFTLTISSLQPEDVATYYC. Residues 111-117 are complementarity-determining-3; the sequence is QKYNSAP.

Immunoglobulins are composed of two identical heavy chains and two identical light chains; disulfide-linked.

The protein resides in the secreted. It is found in the cell membrane. In terms of biological role, v region of the variable domain of immunoglobulin light chains that participates in the antigen recognition. Immunoglobulins, also known as antibodies, are membrane-bound or secreted glycoproteins produced by B lymphocytes. In the recognition phase of humoral immunity, the membrane-bound immunoglobulins serve as receptors which, upon binding of a specific antigen, trigger the clonal expansion and differentiation of B lymphocytes into immunoglobulins-secreting plasma cells. Secreted immunoglobulins mediate the effector phase of humoral immunity, which results in the elimination of bound antigens. The antigen binding site is formed by the variable domain of one heavy chain, together with that of its associated light chain. Thus, each immunoglobulin has two antigen binding sites with remarkable affinity for a particular antigen. The variable domains are assembled by a process called V-(D)-J rearrangement and can then be subjected to somatic hypermutations which, after exposure to antigen and selection, allow affinity maturation for a particular antigen. The chain is Immunoglobulin kappa variable 1-27 from Homo sapiens (Human).